The chain runs to 550 residues: Thermosome subunit (550 aa).

Residues 529–550 (KEKEGEKGGGGSEDFSSSSDLD) form a disordered region. The segment covering 541 to 550 (EDFSSSSDLD) has biased composition (low complexity).

Belongs to the TCP-1 chaperonin family. Forms an oligomeric complex of eight-membered rings.

Its function is as follows. Molecular chaperone; binds unfolded polypeptides in vitro, and has a weak ATPase activity. The chain is Thermosome subunit (ths) from Pyrococcus abyssi (strain GE5 / Orsay).